Reading from the N-terminus, the 488-residue chain is MPGGRRGPSRQQLSRSALPSLQTLVGGGCGNGTGLRNRNGSAIGLPVPPITALITPGPVRHCQIPDLPVDGSLLFEFLFFIYLLVALFIQYINIYKTVWWYPYNHPASCTSLNFHLIDYHLAAFITVMLARRLVWALISEATKAGAASMIHYMVLISARLVLLTLCGWVLCWTLVNLFRSHSVLNLLFLGYPFGVYVPLCCFHQDSRAHLLLTDYNYVVQHEAVEESASTVGGLAKSKDFLSLLLESLKEQFNNATPIPTHSCPLSPDLIRNEVECLKADFNHRIKEVLFNSLFSAYYVAFLPLCFVKSTQYYDMRWSCEHLIMVWINAFVMLTTQLLPSKYCDLLHKSAAHLGKWQKLEHGSYSNAPQHIWSENTIWPQGVLVRHSRCLYRAMGPYNVAVPSDVSHARFYFLFHRPLRLLNLLILIEGSVVFYQLYSLLRSEKWNHTLSMALILFCNYYVLFKLLRDRIVLGRAYSYPLNSYELKAN.

Residues asparagine 31 and asparagine 39 are each glycosylated (N-linked (GlcNAc...) asparagine). 8 helical membrane-spanning segments follow: residues 72–92 (SLLFEFLFFIYLLVALFIQYI), 110–130 (TSLNFHLIDYHLAAFITVMLA), 154–174 (VLISARLVLLTLCGWVLCWTL), 182–202 (SVLNLLFLGYPFGVYVPLCCF), 287–307 (EVLFNSLFSAYYVAFLPLCFV), 319–339 (CEHLIMVWINAFVMLTTQLLP), 420–440 (LLNLLILIEGSVVFYQLYSLL), and 446–466 (NHTLSMALILFCNYYVLFKLL).

It belongs to the TMEM39 family. Interacts with SACM1L, SEC23A and SEC24A. In terms of assembly, (Microbial infection) Interacts with encephalomyocarditis virus (EMCV) major capsid proteins VP1 and VP2. In terms of tissue distribution, up-regulated in brain tumor glioblastoma multiforme cells (at protein level).

The protein resides in the endoplasmic reticulum membrane. Regulates autophagy by controlling the spatial distribution and levels of the intracellular phosphatidylinositol 4-phosphate (PtdIns(4)P) pools. Modulates (PtdIns(4)P) levels by regulating the ER-to-Golgi trafficking of the phosphatidylinositide phosphatase SACM1L. In terms of biological role, (Microbial infection) Positively regulates the replication of encephalomyocarditis virus (EMCV) via autophagy-dependent pathway. The sequence is that of Transmembrane protein 39A (TMEM39A) from Homo sapiens (Human).